The primary structure comprises 343 residues: Probable 4-hydroxy-tetrahydrodipicolinate reductase 1, chloroplastic (343 aa).

The transit peptide at 1 to 14 (MLASTFATHPAAAA) directs the protein to the chloroplast. NAD(+) contacts are provided by residues 167 to 169 (GTT) and 190 to 193 (SPQM). Residue His226 is the Proton donor/acceptor of the active site. Catalysis depends on Lys230, which acts as the Proton donor. 235–236 (GT) provides a ligand contact to (S)-2,3,4,5-tetrahydrodipicolinate.

The protein belongs to the DapB family.

The protein localises to the plastid. It localises to the chloroplast. The enzyme catalyses (S)-2,3,4,5-tetrahydrodipicolinate + NAD(+) + H2O = (2S,4S)-4-hydroxy-2,3,4,5-tetrahydrodipicolinate + NADH + H(+). It catalyses the reaction (S)-2,3,4,5-tetrahydrodipicolinate + NADP(+) + H2O = (2S,4S)-4-hydroxy-2,3,4,5-tetrahydrodipicolinate + NADPH + H(+). The protein operates within amino-acid biosynthesis; L-lysine biosynthesis via DAP pathway; (S)-tetrahydrodipicolinate from L-aspartate: step 4/4. Functionally, catalyzes the conversion of 4-hydroxy-tetrahydrodipicolinate (HTPA) to tetrahydrodipicolinate. The chain is Probable 4-hydroxy-tetrahydrodipicolinate reductase 1, chloroplastic (DAPB1) from Oryza sativa subsp. japonica (Rice).